A 96-amino-acid chain; its full sequence is MSAVTPVLDGLAIRLYIQPKASRDQIVGLHGDELKVAITAPPVDGQANAHLIKFLAKQFKVAKGNVTIEKGELGRHKQLRIVNPQQIPDVVAALIE.

This sequence belongs to the UPF0235 family.

This is UPF0235 protein Spro_4033 from Serratia proteamaculans (strain 568).